The sequence spans 181 residues: Phospholipase A2 inhibitor gamma subunit B (181 aa).

Intrachain disulfides connect Cys3-Cys27, Cys6-Cys13, Cys20-Cys48, Cys54-Cys75, Cys76-Cys81, Cys101-Cys126, Cys119-Cys146, and Cys152-Cys172.

The protein belongs to the CNF-like-inhibitor family. In terms of assembly, heterotrimer of 2 subunits A and 1 subunit B. Expressed by the liver.

The protein localises to the secreted. Functionally, strongly inhibits its own venom PLA2 and all other PLA2s tested including Elapid, Crotalid and Viperid venom PLA2s, as well as honeybee PLA2s. This chain is Phospholipase A2 inhibitor gamma subunit B, found in Laticauda semifasciata (Black-banded sea krait).